We begin with the raw amino-acid sequence, 109 residues long: Protein TAR1 (109 aa).

The tract at residues 62-109 (HFTNNWDPRHTGFSPSMTSCSKEHRQGPATKLPSSNYNSDVEDARFQI) is disordered.

The protein localises to the mitochondrion. Functionally, may be involved in mtDNA stability or mitochondrial gene expression regulation at the post-transcriptional level. This chain is Protein TAR1 (TAR1-A), found in Kluyveromyces lactis (strain ATCC 8585 / CBS 2359 / DSM 70799 / NBRC 1267 / NRRL Y-1140 / WM37) (Yeast).